Here is a 211-residue protein sequence, read N- to C-terminus: Adenylate kinase (211 aa).

10 to 15 (GSGKGT) serves as a coordination point for ATP. Residues 30 to 59 (STGDMLRAEVSKKSPLGLKAEEYMKQGLLV) are NMP. AMP-binding positions include threonine 31, arginine 36, 57 to 59 (LLV), 84 to 87 (GFPR), and glutamine 91. The segment at 125–162 (GRRVCPKCGATYNIYYQKPKNDTLCDNDATPLIQRDDD) is LID. Arginine 126 is a binding site for ATP. The Zn(2+) site is built by cysteine 129 and cysteine 132. 135–136 (TY) contributes to the ATP binding site. 2 residues coordinate Zn(2+): cysteine 149 and aspartate 152. Residues arginine 159 and arginine 170 each coordinate AMP. Glycine 198 provides a ligand contact to ATP.

It belongs to the adenylate kinase family. In terms of assembly, monomer.

It localises to the cytoplasm. The enzyme catalyses AMP + ATP = 2 ADP. Its pathway is purine metabolism; AMP biosynthesis via salvage pathway; AMP from ADP: step 1/1. In terms of biological role, catalyzes the reversible transfer of the terminal phosphate group between ATP and AMP. Plays an important role in cellular energy homeostasis and in adenine nucleotide metabolism. This chain is Adenylate kinase, found in Hydrogenobaculum sp. (strain Y04AAS1).